The following is a 140-amino-acid chain: Large ribosomal subunit protein uL11 (140 aa).

It belongs to the universal ribosomal protein uL11 family. In terms of assembly, part of the ribosomal stalk of the 50S ribosomal subunit. Interacts with L10 and the large rRNA to form the base of the stalk. L10 forms an elongated spine to which L12 dimers bind in a sequential fashion forming a multimeric L10(L12)X complex. One or more lysine residues are methylated.

Forms part of the ribosomal stalk which helps the ribosome interact with GTP-bound translation factors. In Desulfovibrio desulfuricans (strain ATCC 27774 / DSM 6949 / MB), this protein is Large ribosomal subunit protein uL11.